Here is an 804-residue protein sequence, read N- to C-terminus: Ribonucleoside-diphosphate reductase large subunit-like protein (804 aa).

It belongs to the ribonucleoside diphosphate reductase large chain family. As to quaternary structure, the genome of human herpesvirus-6 does not code for a ribonucleotide reductase small subunit.

It localises to the virion. The protein resides in the host cytoplasm. In terms of biological role, does not possess a ribonucleotide reductase activity. Betaherpesviruses probably use another strategy to expand the dNTP pool in a quiescent host cell. The polypeptide is Ribonucleoside-diphosphate reductase large subunit-like protein (Human herpesvirus 6B (strain Z29) (HHV-6 variant B)).